Reading from the N-terminus, the 155-residue chain is Small ribosomal subunit protein uS7 (155 aa).

It belongs to the universal ribosomal protein uS7 family. In terms of assembly, part of the 30S ribosomal subunit. Contacts proteins S9 and S11.

One of the primary rRNA binding proteins, it binds directly to 16S rRNA where it nucleates assembly of the head domain of the 30S subunit. Is located at the subunit interface close to the decoding center, probably blocks exit of the E-site tRNA. The sequence is that of Small ribosomal subunit protein uS7 from Thermotoga maritima (strain ATCC 43589 / DSM 3109 / JCM 10099 / NBRC 100826 / MSB8).